Reading from the N-terminus, the 820-residue chain is Cell division control protein 48 homolog C (820 aa).

Disordered stretches follow at residues 72–157 (RVKD…RFDL) and 169–188 (LNSS…VEVE). A compositionally biased stretch (acidic residues) spans 76–87 (EDEDDNIGDEEG). Residues 85 to 122 (EEGSASQRKKQRRVDEKEEKLQRAEQSHLRKRNMERSV) are a coiled coil. Residues 97 to 119 (RVDEKEEKLQRAEQSHLRKRNME) show a composition bias toward basic and acidic residues. The span at 121-142 (SVSSSPSSSSSSEDSGDVSTSE) shows a compositional bias: low complexity. ATP-binding positions include 274-281 (GPPGCGKT) and 569-576 (GPPGCGKT).

It belongs to the AAA ATPase family.

The protein resides in the nucleus. It localises to the cytoplasm. It is found in the cytoskeleton. The protein localises to the phragmoplast. Functionally, probably functions in cell division and growth processes. Interacts with certain SNAREs as part of specialized membrane fusion events where vesicles from the same organelle fuse (homotypic fusion). This Arabidopsis thaliana (Mouse-ear cress) protein is Cell division control protein 48 homolog C (CDC48C).